We begin with the raw amino-acid sequence, 290 residues long: Aquaporin PIP2-1 (290 aa).

Positions 1 to 20 (MGKDDVIESGAGGGEFAAKD) are disordered. Transmembrane regions (helical) follow at residues 43–63 (AVIA…ATVI) and 80–100 (CGGV…FVLV). Residues 112-114 (NPA) carry the NPA 1 motif. The next 3 helical transmembrane spans lie at 131–151 (LLYI…VKAF), 173–193 (GTGL…VFSA), and 205–225 (VPVL…LATI). The NPA 2 motif lies at 233–235 (NPA). A helical membrane pass occupies residues 255 to 275 (IFWVGPLVGAAIAAFYHQYIL).

The protein belongs to the MIP/aquaporin (TC 1.A.8) family. PIP (TC 1.A.8.11) subfamily. As to quaternary structure, homomers. Can interact with PIP1-2 to form heteromers. Expressed in roots.

Its subcellular location is the cell membrane. Functionally, water channel required to facilitate the transport of water across cell membrane. Active as homomers. Increased activity when heteromerization with PIP1-2. The protein is Aquaporin PIP2-1 (PIP2-1) of Zea mays (Maize).